The primary structure comprises 473 residues: Serine carboxypeptidase-like 25 (473 aa).

A signal peptide spans 1 to 22; sequence MAMAKLAIFTTLMAILVMTSQG. Residues N46 and N143 are each glycosylated (N-linked (GlcNAc...) asparagine). 3 disulfides stabilise this stretch: C92–C358, C252–C263, and C288–C326. S185 is an active-site residue. N289, N299, N347, and N367 each carry an N-linked (GlcNAc...) asparagine glycan. Active-site residues include D395 and H447.

This sequence belongs to the peptidase S10 family. In terms of tissue distribution, ubiquitous.

It is found in the secreted. Its function is as follows. Probable carboxypeptidase. The protein is Serine carboxypeptidase-like 25 (SCPL25) of Arabidopsis thaliana (Mouse-ear cress).